Consider the following 170-residue polypeptide: Urease accessory protein UreE (170 aa).

Belongs to the UreE family.

The protein resides in the cytoplasm. In terms of biological role, involved in urease metallocenter assembly. Binds nickel. Probably functions as a nickel donor during metallocenter assembly. This Helicobacter pylori (strain J99 / ATCC 700824) (Campylobacter pylori J99) protein is Urease accessory protein UreE.